The primary structure comprises 364 residues: Chorismate synthase (364 aa).

NADP(+)-binding residues include Arg48 and Arg54. FMN-binding positions include 125–127 (RSS), 238–239 (NA), Gly278, 293–297 (KPTSS), and Arg319.

The protein belongs to the chorismate synthase family. As to quaternary structure, homotetramer. It depends on FMNH2 as a cofactor.

The catalysed reaction is 5-O-(1-carboxyvinyl)-3-phosphoshikimate = chorismate + phosphate. Its pathway is metabolic intermediate biosynthesis; chorismate biosynthesis; chorismate from D-erythrose 4-phosphate and phosphoenolpyruvate: step 7/7. Its function is as follows. Catalyzes the anti-1,4-elimination of the C-3 phosphate and the C-6 proR hydrogen from 5-enolpyruvylshikimate-3-phosphate (EPSP) to yield chorismate, which is the branch point compound that serves as the starting substrate for the three terminal pathways of aromatic amino acid biosynthesis. This reaction introduces a second double bond into the aromatic ring system. This is Chorismate synthase from Shewanella loihica (strain ATCC BAA-1088 / PV-4).